Here is a 258-residue protein sequence, read N- to C-terminus: MVTAHFVLIHTICHGAWIWHKLKPALERAGHKVTALDMAASGIDPRQIEQINSFDEYSEPLLTFLEKLPQGEKVIIVGESCAGLNIAIAADRYVDKIAAGVFHNSLLPDTVHSPSYTVEKLLESFPDWRDTEYFTFTNITGETITTMKLGFVLLRENLFTKCTDGEYELAKMVMRKGSLFQNVLAQRPKFTEKGYGSIKKVYIWTDQDKIFLPDFQRWQIANYKPDKVYQVQGGDHKLQLTKTEEVAHILQEVADAYA.

Residues 5–242 form the AB hydrolase-1 domain; the sequence is HFVLIHTICH…GGDHKLQLTK (238 aa). Residues Thr11 and Ser80 each coordinate 2-hydroxy-2-methylpropanenitrile. The acetone site is built by Thr11, Ser80, and Cys81. The active-site Proton donor/acceptor is Ser80. His236 acts as the Proton donor/acceptor in catalysis.

The protein belongs to the AB hydrolase superfamily. Hydroxynitrile lyase family. As to quaternary structure, homotetramer.

The catalysed reaction is a monosubstituted aliphatic (S)-hydroxynitrile = an aldehyde + hydrogen cyanide. It carries out the reaction a disubstituted aliphatic (S)-hydroxynitrile = a ketone + hydrogen cyanide. The enzyme catalyses an aromatic (S)-hydroxynitrile = an aromatic aldehyde + hydrogen cyanide. It catalyses the reaction 2-hydroxy-2-methylpropanenitrile = acetone + hydrogen cyanide. The catalysed reaction is butan-2-one + hydrogen cyanide = 2-hydroxy-2-methylbutanenitrile. It carries out the reaction pentan-2-one + hydrogen cyanide = (2S)-2-hydroxy-2-methylpentanenitrile. The enzyme catalyses hexan-2-one + hydrogen cyanide = (2S)-2-hydroxy-2-methylhexanenitrile. It catalyses the reaction heptan-2-one + hydrogen cyanide = (2S)-2-hydroxy-2-methylheptanenitrile. The catalysed reaction is 4-methylpentan-2-one + hydrogen cyanide = (2S)-2-hydroxy-2,4-dimethylpentanenitrile. It carries out the reaction 3,3-dimethylbutan-2-one + hydrogen cyanide = (2S)-2-hydroxy-2-methyl-3,3-dimethylbutanenitrile. The enzyme catalyses acetophenone + hydrogen cyanide = (2S)-2-hydroxy-2-phenylpropanenitrile. It catalyses the reaction propanal + hydrogen cyanide = (2S)-2-hydroxybutanenitrile. The catalysed reaction is pentanal + hydrogen cyanide = (2S)-2-hydroxyhexanenitrile. It carries out the reaction 2-methylpropanal + hydrogen cyanide = (2S)-2-hydroxy-3-methylbutanenitrile. The enzyme catalyses 2,2-dimethylpropanal + hydrogen cyanide = (2S)-2-hydroxy-3,3-dimethylbutanenitrile. It catalyses the reaction acrolein + hydrogen cyanide = (2S)-2-hydroxybut-3-enenitrile. The catalysed reaction is (2E)-but-2-enal + hydrogen cyanide = (2S,3E)-2-hydroxypent-3-enenitrile. It carries out the reaction (E)-hex-2-enal + hydrogen cyanide = (2S,3E)-2-hydroxyhept-3-enenitrile. The enzyme catalyses cyclohexanecarbaldehyde + hydrogen cyanide = (2S)-2-cyclohexyl-2-hydroxyacetonitrile. It catalyses the reaction benzaldehyde + hydrogen cyanide = (S)-mandelonitrile. The catalysed reaction is 4-methoxybenzaldehyde + hydrogen cyanide = (2S)-2-hydroxy-2-(4-methoxyphenyl)acetonitrile. It carries out the reaction piperonal + hydrogen cyanide = (2S)-2-(2H-1,3-benzodioxol-5-yl)-2-hydroxyacetonitrile. The enzyme catalyses formylthiophene + hydrogen cyanide = (2R)-2-hydroxy-2-(thiophen-2-yl)acetonitrile. It catalyses the reaction 3-formylthiophene + hydrogen cyanide = (2S)-2-hydroxy-2-(thiophen-3-yl)acetonitrile. The catalysed reaction is furan-3-carbaldehyde + hydrogen cyanide = (2S)-2-(furan-3-yl)-2-hydroxyacetonitrile. Functionally, involved in cyanogenesis, the release of HCN from cyanogenic glycosides in injured tissues; the release of toxic HCN is believed to play a central role in the defense mechanism of plants against herbivores and microbial attack. Decomposes a variety of cyanohydrins (alpha-hydroxynitriles) into HCN and the corresponding aldehydes or ketones; two natural substrates are 2-hydroxy-2-methylpropanenitrile (acetone cyanohydrin) and 2-hydroxy-2-methylbutanenitrile (2-butanone cyanohydrin), but in vitro can also act on 2-hydroxy-2-methylpentanenitrile (2-pentanone cyanohydrin) and mandelonitrile. Is also able to catalyze the reverse reaction in vitro, leading to the stereospecific synthesis of aliphatic, aromatic, and heterocyclic cyanohydrins, important intermediates in the production of various agrochemicals or pharmaceuticals. The sequence is that of (S)-hydroxynitrile lyase from Manihot esculenta (Cassava).